The sequence spans 453 residues: Bifunctional protein GlmU (453 aa).

The segment at 1–225 (MHAHVILAAG…AEEALGVNTR (225 aa)) is pyrophosphorylase. UDP-N-acetyl-alpha-D-glucosamine-binding positions include 7–10 (LAAG), Lys-21, Gln-72, and 77–78 (GT). Mg(2+) is bound at residue Asp-102. UDP-N-acetyl-alpha-D-glucosamine is bound by residues Gly-138, Glu-152, Asn-167, and Asn-223. Asn-223 lines the Mg(2+) pocket. Residues 226–246 (EELARVEGVLLRRLRAEWMGK) are linker. The tract at residues 247 to 453 (GVRMILPETI…GYALRKLGEG (207 aa)) is N-acetyltransferase. UDP-N-acetyl-alpha-D-glucosamine is bound by residues Arg-329 and Lys-347. His-359 acts as the Proton acceptor in catalysis. 2 residues coordinate UDP-N-acetyl-alpha-D-glucosamine: Tyr-362 and Asn-373. Residues Ala-376, 382 to 383 (NY), Ser-401, Ala-419, and Arg-436 contribute to the acetyl-CoA site.

It in the N-terminal section; belongs to the N-acetylglucosamine-1-phosphate uridyltransferase family. This sequence in the C-terminal section; belongs to the transferase hexapeptide repeat family. In terms of assembly, homotrimer. Mg(2+) serves as cofactor.

It is found in the cytoplasm. It catalyses the reaction alpha-D-glucosamine 1-phosphate + acetyl-CoA = N-acetyl-alpha-D-glucosamine 1-phosphate + CoA + H(+). It carries out the reaction N-acetyl-alpha-D-glucosamine 1-phosphate + UTP + H(+) = UDP-N-acetyl-alpha-D-glucosamine + diphosphate. Its pathway is nucleotide-sugar biosynthesis; UDP-N-acetyl-alpha-D-glucosamine biosynthesis; N-acetyl-alpha-D-glucosamine 1-phosphate from alpha-D-glucosamine 6-phosphate (route II): step 2/2. It functions in the pathway nucleotide-sugar biosynthesis; UDP-N-acetyl-alpha-D-glucosamine biosynthesis; UDP-N-acetyl-alpha-D-glucosamine from N-acetyl-alpha-D-glucosamine 1-phosphate: step 1/1. The protein operates within bacterial outer membrane biogenesis; LPS lipid A biosynthesis. Catalyzes the last two sequential reactions in the de novo biosynthetic pathway for UDP-N-acetylglucosamine (UDP-GlcNAc). The C-terminal domain catalyzes the transfer of acetyl group from acetyl coenzyme A to glucosamine-1-phosphate (GlcN-1-P) to produce N-acetylglucosamine-1-phosphate (GlcNAc-1-P), which is converted into UDP-GlcNAc by the transfer of uridine 5-monophosphate (from uridine 5-triphosphate), a reaction catalyzed by the N-terminal domain. This is Bifunctional protein GlmU from Thermus thermophilus (strain ATCC 27634 / DSM 579 / HB8).